Here is a 110-residue protein sequence, read N- to C-terminus: Large ribosomal subunit protein uL22 (110 aa).

Belongs to the universal ribosomal protein uL22 family. In terms of assembly, part of the 50S ribosomal subunit.

Functionally, this protein binds specifically to 23S rRNA; its binding is stimulated by other ribosomal proteins, e.g. L4, L17, and L20. It is important during the early stages of 50S assembly. It makes multiple contacts with different domains of the 23S rRNA in the assembled 50S subunit and ribosome. Its function is as follows. The globular domain of the protein is located near the polypeptide exit tunnel on the outside of the subunit, while an extended beta-hairpin is found that lines the wall of the exit tunnel in the center of the 70S ribosome. This Syntrophus aciditrophicus (strain SB) protein is Large ribosomal subunit protein uL22.